The chain runs to 73 residues: Sec-independent protein translocase protein TatA (73 aa).

A helical transmembrane segment spans residues 1-21; the sequence is MGSFSIWHWVIVLVVVVLIFG. The segment at 43 to 73 is disordered; the sequence is MKSEGEDAAQTPPAAQKEGGRVIDAEPADKK. Residues 60 to 73 are compositionally biased toward basic and acidic residues; it reads EGGRVIDAEPADKK.

This sequence belongs to the TatA/E family. In terms of assembly, the Tat system comprises two distinct complexes: a TatABC complex, containing multiple copies of TatA, TatB and TatC subunits, and a separate TatA complex, containing only TatA subunits. Substrates initially bind to the TatABC complex, which probably triggers association of the separate TatA complex to form the active translocon.

The protein resides in the cell inner membrane. Part of the twin-arginine translocation (Tat) system that transports large folded proteins containing a characteristic twin-arginine motif in their signal peptide across membranes. TatA could form the protein-conducting channel of the Tat system. The polypeptide is Sec-independent protein translocase protein TatA (Laribacter hongkongensis (strain HLHK9)).